Consider the following 387-residue polypeptide: tRNA pseudouridine synthase B (387 aa).

Asp-43 functions as the Nucleophile in the catalytic mechanism.

It belongs to the pseudouridine synthase TruB family. Type 1 subfamily.

The enzyme catalyses uridine(55) in tRNA = pseudouridine(55) in tRNA. In terms of biological role, responsible for synthesis of pseudouridine from uracil-55 in the psi GC loop of transfer RNAs. This is tRNA pseudouridine synthase B from Bifidobacterium longum (strain DJO10A).